The primary structure comprises 364 residues: Probable protein disulfide-isomerase A6 (364 aa).

An N-terminal signal peptide occupies residues 1 to 28 (MKMEMHQIWSRIALASFAFAILFVSVSA). 2 Thioredoxin domains span residues 29–137 (DDVV…TEGG) and 139–256 (NVKI…EKSG). Residues cysteine 58, cysteine 61, cysteine 177, and cysteine 180 each act as nucleophile in the active site. 2 cysteine pairs are disulfide-bonded: cysteine 58/cysteine 61 and cysteine 177/cysteine 180.

It belongs to the protein disulfide isomerase family.

The protein localises to the endoplasmic reticulum lumen. It catalyses the reaction Catalyzes the rearrangement of -S-S- bonds in proteins.. This Medicago sativa (Alfalfa) protein is Probable protein disulfide-isomerase A6.